The sequence spans 337 residues: Biotin synthase (337 aa).

Positions 39-267 (QEVQVCTLLS…KAMVRLSAGR (229 aa)) constitute a Radical SAM core domain. Positions 54, 58, and 61 each coordinate [4Fe-4S] cluster. Residues Cys98, Cys130, Cys190, and Arg262 each contribute to the [2Fe-2S] cluster site.

This sequence belongs to the radical SAM superfamily. Biotin synthase family. In terms of assembly, homodimer. [4Fe-4S] cluster is required as a cofactor. The cofactor is [2Fe-2S] cluster.

It carries out the reaction (4R,5S)-dethiobiotin + (sulfur carrier)-SH + 2 reduced [2Fe-2S]-[ferredoxin] + 2 S-adenosyl-L-methionine = (sulfur carrier)-H + biotin + 2 5'-deoxyadenosine + 2 L-methionine + 2 oxidized [2Fe-2S]-[ferredoxin]. The protein operates within cofactor biosynthesis; biotin biosynthesis; biotin from 7,8-diaminononanoate: step 2/2. Catalyzes the conversion of dethiobiotin (DTB) to biotin by the insertion of a sulfur atom into dethiobiotin via a radical-based mechanism. The polypeptide is Biotin synthase (Cytophaga hutchinsonii (strain ATCC 33406 / DSM 1761 / CIP 103989 / NBRC 15051 / NCIMB 9469 / D465)).